Here is a 308-residue protein sequence, read N- to C-terminus: Ankyrin repeat and SOCS box protein 12 (308 aa).

ANK repeat units lie at residues 63–92, 96–125, 129–158, 171–200, and 213–243; these read IPGT…DVDS, KAQT…CPSG, NNCS…EANV, SCSG…DPDY, and QPRT…NIYL. The SOCS box domain maps to 268–308; the sequence is PRSLLSQTRLVIRRSLCRANQSQATDQLDIPPVLISYLKHQ.

It belongs to the ankyrin SOCS box (ASB) family. As to quaternary structure, interacts with CUL5 and RNF7.

Its pathway is protein modification; protein ubiquitination. Its function is as follows. Probable substrate-recognition component of a SCF-like ECS (Elongin-Cullin-SOCS-box protein) E3 ubiquitin-protein ligase complex which mediates the ubiquitination and subsequent proteasomal degradation of target proteins. This is Ankyrin repeat and SOCS box protein 12 (Asb12) from Mus musculus (Mouse).